Consider the following 231-residue polypeptide: Sugar fermentation stimulation protein homolog (231 aa).

This sequence belongs to the SfsA family.

The sequence is that of Sugar fermentation stimulation protein homolog from Syntrophotalea carbinolica (strain DSM 2380 / NBRC 103641 / GraBd1) (Pelobacter carbinolicus).